The chain runs to 68 residues: Large ribosomal subunit protein bL32 (68 aa).

It belongs to the bacterial ribosomal protein bL32 family.

In Orientia tsutsugamushi (strain Boryong) (Rickettsia tsutsugamushi), this protein is Large ribosomal subunit protein bL32.